A 158-amino-acid polypeptide reads, in one-letter code: Methylated-DNA--protein-cysteine methyltransferase (158 aa).

Catalysis depends on cysteine 126, which acts as the Nucleophile; methyl group acceptor.

It belongs to the MGMT family.

Its subcellular location is the cytoplasm. It catalyses the reaction a 6-O-methyl-2'-deoxyguanosine in DNA + L-cysteinyl-[protein] = S-methyl-L-cysteinyl-[protein] + a 2'-deoxyguanosine in DNA. The enzyme catalyses a 4-O-methyl-thymidine in DNA + L-cysteinyl-[protein] = a thymidine in DNA + S-methyl-L-cysteinyl-[protein]. In terms of biological role, involved in the cellular defense against the biological effects of O6-methylguanine (O6-MeG) and O4-methylthymine (O4-MeT) in DNA. Repairs the methylated nucleobase in DNA by stoichiometrically transferring the methyl group to a cysteine residue in the enzyme. This is a suicide reaction: the enzyme is irreversibly inactivated. In Methanosarcina barkeri (strain Fusaro / DSM 804), this protein is Methylated-DNA--protein-cysteine methyltransferase.